The following is a 1127-amino-acid chain: Elongation factor-like GTPase 1 (1127 aa).

The region spanning 17-272 (ANIRNICVLA…LLKTLWGDYY (256 aa)) is the tr-type G domain. Residues 26 to 33 (AHVDHGKT), 92 to 96 (DSPGH), and 146 to 149 (NKID) contribute to the GTP site. The disordered stretch occupies residues 429 to 496 (KPRPLTQEEM…VASVSRQPVS (68 aa)). Composition is skewed to basic and acidic residues over residues 438 to 452 (MAQR…HAEK) and 474 to 484 (SPHEDEPRGDE). Residue lysine 528 is modified to N6-acetyllysine.

Belongs to the TRAFAC class translation factor GTPase superfamily. Classic translation factor GTPase family. Associates with the 60S ribosomal subunit. Found in a complex consisting of the 60S ribosomal subunit, SBDS and EFL1.

It carries out the reaction GTP + H2O = GDP + phosphate + H(+). GTPase activity is stimulated in the presence of 60S ribosome subunits. Its function is as follows. GTPase involved in the biogenesis of the 60S ribosomal subunit and translational activation of ribosomes. Together with SBDS, triggers the GTP-dependent release of EIF6 from 60S pre-ribosomes in the cytoplasm, thereby activating ribosomes for translation competence by allowing 80S ribosome assembly and facilitating EIF6 recycling to the nucleus, where it is required for 60S rRNA processing and nuclear export. This is Elongation factor-like GTPase 1 (Efl1) from Mus musculus (Mouse).